Reading from the N-terminus, the 1193-residue chain is MWRVKKLSLSLSPSPQTGKPSMRTPLRELTLQPGALTNSGKRSPACSSLTPSLCKLGLQEGSNNSSPVDFVNNKRTDLSSEHFSHSSKWLETCQHESDEQPLDPIPQISSTPKTSEEAVDPLGNYMVKTIVLVPSPLGQQQDMIFEARLDTMAETNSISLNGPLRTDDLVREEVAPCMGDRFSEVAAVSEKPIFQESPSHLLEESPPNPCSEQLHCSKESLSSRTEAVREDLVPSESNAFLPSSVLWLSPSTALAADFRVNHVDPEEEIVEHGAMEEREMRFPTHPKESETEDQALVSSVEDILSTCLTPNLVEMESQEAPGPAVEDVGRILGSDTESWMSPLAWLEKGVNTSVMLENLRQSLSLPSMLRDAAIGTTPFSTCSVGTWFTPSAPQEKSTNTSQTGLVGTKHSTSETEQLLCGRPPDLTALSRHDLEDNLLSSLVILEVLSRQLRDWKSQLAVPHPETQDSSTQTDTSHSGITNKLQHLKESHEMGQALQQARNVMQSWVLISKELISLLHLSLLHLEEDKTTVSQESRRAETLVCCCFDLLKKLRAKLQSLKAEREEARHREEMALRGKDAAEIVLEAFCAHASQRISQLEQDLASMREFRGLLKDAQTQLVGLHAKQEELVQQTVSLTSTLQQDWRSMQLDYTTWTALLSRSRQLTEKLTVKSQQALQERDVAIEEKQEVSRVLEQVSAQLEECKGQTEQLELENSRLATDLRAQLQILANMDSQLKELQSQHTHCAQDLAMKDELLCQLTQSNEEQAAQWQKEEMALKHMQAELQQQQAVLAKEVRDLKETLEFADQENQVAHLELGQVECQLKTTLEVLRERSLQCENLKDTVENLTAKLASTIADNQEQDLEKTRQYSQKLGLLTEQLQSLTLFLQTKLKEKTEQETLLLSTACPPTQEHPLPNDRTFLGSILTAVADEEPESTPVPLLGSDKSAFTRVASMVSLQPAETPGMEESLAEMSIMTTELQSLCSLLQESKEEAIRTLQRKICELQARLQAQEEQHQEVQKAKEADIEKLNQALCLRYKNEKELQEVIQQQNEKILEQIDKSGELISLREEVTHLTRSLRRAETETKVLQEALAGQLDSNCQPMATNWIQEKVWLSQEVDKLRVMFLEMKNEKEKLMIKFQSHRNILEENLRRSDKELEKLDDIVQHIYKTLLSIPEVVRGCKELQGLLEFLS.

The disordered stretch occupies residues 1-48; sequence MWRVKKLSLSLSPSPQTGKPSMRTPLRELTLQPGALTNSGKRSPACSS. 5 positions are modified to phosphoserine: S12, S14, S43, S62, and S66. Over residues 35–48 the composition is skewed to polar residues; the sequence is ALTNSGKRSPACSS. The tract at residues 96–117 is disordered; it reads ESDEQPLDPIPQISSTPKTSEE. The residue at position 111 (T111) is a Phosphothreonine; by GSK3-beta. 3 positions are modified to phosphoserine: S135, S159, and S334. T336 bears the Phosphothreonine mark. 3 positions are modified to phosphoserine: S341, S353, and S362. Residues 390-405 show a composition bias toward polar residues; that stretch reads PSAPQEKSTNTSQTGL. Residues 390 to 416 form a disordered region; it reads PSAPQEKSTNTSQTGLVGTKHSTSETE. Positions 482–850 are interaction with KNSTRN; sequence NKLQHLKESH…LKDTVENLTA (369 aa). 2 coiled-coil regions span residues 545–608 and 759–868; these read CCFD…SMRE and QLTQ…EKTR. At T937 the chain carries Phosphothreonine; by GSK3-beta. S974 is modified (phosphoserine; by GSK3-beta). The residue at position 978 (T978) is a Phosphothreonine; by GSK3-beta. A coiled-coil region spans residues 979–1174; it reads ELQSLCSLLQ…VQHIYKTLLS (196 aa).

As to quaternary structure, homodimer, with a globular head domain and a long stalk. Homooligomer; the globular head domains associate, resulting in aster-like structures. Binds to microtubules in the mitotic spindle. Interacts with DCLRE1B/Apollo. Part of an astrin (SPAG5)-kinastrin (SKAP) complex containing KNSTRN, SPAG5, PLK1, DYNLL1 and SGO2. Interacts with KNSTRN. Interacts with RPTOR; this interaction competes with RPTOR binding to MTOR, resulting in decreased mTORC1 formation. Interacts with G3BP1. The complex formed with G3BP1 AND RPTOR is increased by oxidative stress. Interacts with OSBPL8, PCM1 and CDK5RAP2. Interacts (via C-terminus) with NUMA1 (via C-terminus); this interaction promotes the recruitment of SPAG5 to the microtubules at spindle poles in a dynein-dynactin-dependent manner. Interacts with DYNLL1. In terms of processing, phosphorylated by AURKA. In terms of tissue distribution, highly expressed in testis. Detected at low levels in placenta, liver, pancreas, thymus and colon.

The protein resides in the cytoplasm. Its subcellular location is the cytoskeleton. It is found in the spindle. It localises to the spindle pole. The protein localises to the chromosome. The protein resides in the centromere. Its subcellular location is the kinetochore. It is found in the midbody. It localises to the microtubule organizing center. The protein localises to the centrosome. The protein resides in the cytoplasmic granule. Its subcellular location is the centriolar satellite. Functionally, essential component of the mitotic spindle required for normal chromosome segregation and progression into anaphase. Required for chromosome alignment, normal timing of sister chromatid segregation, and maintenance of spindle pole architecture. In complex with SKAP, promotes stable microtubule-kinetochore attachments. May contribute to the regulation of separase activity. May regulate AURKA localization to mitotic spindle, but not to centrosomes and CCNB1 localization to both mitotic spindle and centrosomes. Involved in centriole duplication. Required for CDK5RAP2, CEP152, WDR62 and CEP63 centrosomal localization and promotes the centrosomal localization of CDK2. In non-mitotic cells, upon stress induction, inhibits mammalian target of rapamycin complex 1 (mTORC1) association and recruits the mTORC1 component RPTOR to stress granules (SGs), thereby preventing mTORC1 hyperactivation-induced apoptosis. May enhance GSK3B-mediated phosphorylation of other substrates, such as MAPT/TAU. The chain is Sperm-associated antigen 5 (SPAG5) from Homo sapiens (Human).